The following is a 476-amino-acid chain: MDKNLMMPKRSRIDVKGNFANGPLQARPLVALLDGRDCSIEMPILKDVATVAFCDAQSTSEIHEKVLNEAVGALMWHTIILTKEDLEKFKALRIIVRIGSGTDNIDVKAAGELGIAVCNVPGYGVEEVADTTMCLILNLYRRTYWLANMVREGKKFTGPEQVREAAHGCARIRGDTLGLVGLGRIGSAVALRAKAFGFNVIFYDPYLPDGIDKSLGLTRVYTLQDLLFQSDCVSLHCTLNEHNHHLINEFTIKQMRPGAFLVNTARGGLVDDETLALALKQGRIRAAALDVHENEPYNVFQGALKDAPNLICTPHAAFFSDASATELREMAATEIRRAIVGNIPDVLRNCVNKEYFMRTPPAAAAGGVAAAVYPEGALHHRAHSTTPHDGPHSTTNLGSTVGGGPTTVAQAAAAAVAAAAAAALLPSPVPSHLSPQVGGLPLGIVSSQSPLSAPDPNNHLSSSIKTEVKAESTEAP.

NAD(+)-binding positions include Ser100, 180 to 185 (VGLGRI), Asp204, 237 to 243 (CTLNEHN), 264 to 266 (TAR), and Asp290. Arg266 is a catalytic residue. The active site involves Glu295. The Proton donor role is filled by His315. 315 to 318 (HAAF) provides a ligand contact to NAD(+). A disordered region spans residues 445–476 (VSSQSPLSAPDPNNHLSSSIKTEVKAESTEAP). A compositionally biased stretch (basic and acidic residues) spans 466–476 (TEVKAESTEAP).

It belongs to the D-isomer specific 2-hydroxyacid dehydrogenase family. Homodimer. Interacts with hairy (hry), knirps (kni), snail (sna), and Enhancer of split m-delta (HLHm-delta). Complex may be involved in transcriptional repression. Also interacts with adenovirus E1A protein.

It is found in the nucleus. Functionally, corepressor targeting diverse transcription regulators. Hairy-interacting protein required for embryonic segmentation and hairy-mediated transcriptional repression. This is C-terminal-binding protein (CtBP) from Drosophila melanogaster (Fruit fly).